Reading from the N-terminus, the 173-residue chain is Photosystem I assembly protein Ycf3 (173 aa).

3 TPR repeats span residues 35-68, 72-105, and 120-153; these read AFVY…EDDA, SYIL…NPNL, and GERA…APNN.

It belongs to the Ycf3 family.

The protein resides in the cellular thylakoid membrane. Its function is as follows. Essential for the assembly of the photosystem I (PSI) complex. May act as a chaperone-like factor to guide the assembly of the PSI subunits. The protein is Photosystem I assembly protein Ycf3 of Gloeothece citriformis (strain PCC 7424) (Cyanothece sp. (strain PCC 7424)).